The primary structure comprises 157 residues: SsrA-binding protein (157 aa).

Residues 132 to 157 (VHDKRQAQKDKDWAREKDRLFKKAYK) are disordered. Positions 135–157 (KRQAQKDKDWAREKDRLFKKAYK) are enriched in basic and acidic residues.

It belongs to the SmpB family.

It is found in the cytoplasm. Required for rescue of stalled ribosomes mediated by trans-translation. Binds to transfer-messenger RNA (tmRNA), required for stable association of tmRNA with ribosomes. tmRNA and SmpB together mimic tRNA shape, replacing the anticodon stem-loop with SmpB. tmRNA is encoded by the ssrA gene; the 2 termini fold to resemble tRNA(Ala) and it encodes a 'tag peptide', a short internal open reading frame. During trans-translation Ala-aminoacylated tmRNA acts like a tRNA, entering the A-site of stalled ribosomes, displacing the stalled mRNA. The ribosome then switches to translate the ORF on the tmRNA; the nascent peptide is terminated with the 'tag peptide' encoded by the tmRNA and targeted for degradation. The ribosome is freed to recommence translation, which seems to be the essential function of trans-translation. The protein is SsrA-binding protein of Francisella tularensis subsp. tularensis (strain FSC 198).